A 62-amino-acid chain; its full sequence is DNA-directed RNA polymerase subunit Rpo10 (62 aa).

Cysteine 6, cysteine 9, cysteine 43, and cysteine 44 together coordinate Zn(2+).

This sequence belongs to the archaeal Rpo10/eukaryotic RPB10 RNA polymerase subunit family. In terms of assembly, part of the RNA polymerase complex. It depends on Zn(2+) as a cofactor.

The protein localises to the cytoplasm. It catalyses the reaction RNA(n) + a ribonucleoside 5'-triphosphate = RNA(n+1) + diphosphate. Functionally, DNA-dependent RNA polymerase (RNAP) catalyzes the transcription of DNA into RNA using the four ribonucleoside triphosphates as substrates. The polypeptide is DNA-directed RNA polymerase subunit Rpo10 (Methanocorpusculum labreanum (strain ATCC 43576 / DSM 4855 / Z)).